The following is a 228-amino-acid chain: HTH-type transcriptional repressor RspR (228 aa).

The 68-residue stretch at 11-78 (QPVNQQIYRI…PQRGSYVNKI (68 aa)) folds into the HTH gntR-type domain. Residues 38-57 (EKEVSVRFNVSRQPVREAFI) constitute a DNA-binding region (H-T-H motif).

Repressor of the rspAB operon. Acts by binding directly to the upstream region of rspA. The chain is HTH-type transcriptional repressor RspR (rspR) from Escherichia coli (strain K12).